A 434-amino-acid polypeptide reads, in one-letter code: Glutamate-1-semialdehyde 2,1-aminomutase (434 aa).

Residue K266 is modified to N6-(pyridoxal phosphate)lysine.

This sequence belongs to the class-III pyridoxal-phosphate-dependent aminotransferase family. HemL subfamily. Homodimer. The cofactor is pyridoxal 5'-phosphate.

It is found in the cytoplasm. It catalyses the reaction (S)-4-amino-5-oxopentanoate = 5-aminolevulinate. Its pathway is porphyrin-containing compound metabolism; protoporphyrin-IX biosynthesis; 5-aminolevulinate from L-glutamyl-tRNA(Glu): step 2/2. This Fusobacterium nucleatum subsp. nucleatum (strain ATCC 25586 / DSM 15643 / BCRC 10681 / CIP 101130 / JCM 8532 / KCTC 2640 / LMG 13131 / VPI 4355) protein is Glutamate-1-semialdehyde 2,1-aminomutase.